The sequence spans 217 residues: Somatotropin (217 aa).

An N-terminal signal peptide occupies residues 1–27; that stretch reads MATGSHTATLLLAVALLGLPWPQEAGA. His46 lines the Zn(2+) pocket. Cys79 and Cys190 are joined by a disulfide. Phosphoserine is present on Ser132. Glu199 provides a ligand contact to Zn(2+). A disulfide bridge links Cys207 with Cys215.

It belongs to the somatotropin/prolactin family.

The protein localises to the secreted. Plays an important role in growth control. Its major role in stimulating body growth is to stimulate the liver and other tissues to secrete IGF1. It stimulates both the differentiation and proliferation of myoblasts. It also stimulates amino acid uptake and protein synthesis in muscle and other tissues. The chain is Somatotropin (GH1) from Xanthonycticebus pygmaeus (Pygmy slow loris).